Here is a 460-residue protein sequence, read N- to C-terminus: 4-O-methyl-glucuronoyl methylesterase (460 aa).

An N-terminal signal peptide occupies residues 1 to 17 (MASRFFALLLLAIPIQA). Q18 bears the Pyrrolidone carboxylic acid mark. The region spanning 18-53 (QSPVWGQCGGIGWSGPTTCVGGATCVSYNPYYSQCI) is the CBM1 domain. Disulfide bonds link C96–C131, C277–C412, and C309–C384. The short motif at 276 to 281 (GCSRNG) is the GXSYXG catalytic site motif element. S278 functions as the Nucleophile in the catalytic mechanism. Substrate contacts are provided by K282, Q324, E332, and W375. H411 acts as the Proton donor/acceptor in catalysis. N-linked (GlcNAc...) asparagine glycosylation is present at N447.

Belongs to the carbohydrate esterase 15 (CE15) family.

Its subcellular location is the secreted. The catalysed reaction is a 4-O-methyl-alpha-D-glucuronosyl ester derivative + H2O = 4-O-methyl-alpha-D-glucuronate derivative + an alcohol + H(+). In terms of biological role, glucuronoyl esterase which may play a significant role in biomass degradation, as it is considered to disconnect hemicellulose from lignin through the hydrolysis of the ester bond between 4-O-methyl-D-glucuronic acid residues of glucuronoxylans and aromatic alcohols of lignin. Does not hydrolyze substrates of other carbohydrate esterases such as acetylxylan esterase, acetyl esterase and feruloyl esterase. The chain is 4-O-methyl-glucuronoyl methylesterase from Hypocrea jecorina (strain QM6a) (Trichoderma reesei).